The chain runs to 375 residues: Methylthioribose-1-phosphate isomerase (375 aa).

Substrate is bound by residues 53–55 (RGA), Arg90, and Gln202. The active-site Proton donor is the Asp243. 253-254 (NK) is a binding site for substrate.

Belongs to the eIF-2B alpha/beta/delta subunits family. MtnA subfamily.

The enzyme catalyses 5-(methylsulfanyl)-alpha-D-ribose 1-phosphate = 5-(methylsulfanyl)-D-ribulose 1-phosphate. It participates in amino-acid biosynthesis; L-methionine biosynthesis via salvage pathway; L-methionine from S-methyl-5-thio-alpha-D-ribose 1-phosphate: step 1/6. In terms of biological role, catalyzes the interconversion of methylthioribose-1-phosphate (MTR-1-P) into methylthioribulose-1-phosphate (MTRu-1-P). This is Methylthioribose-1-phosphate isomerase from Rhodospirillum centenum (strain ATCC 51521 / SW).